Consider the following 362-residue polypeptide: E3 ubiquitin-protein ligase TM129 (362 aa).

The Lumenal portion of the chain corresponds to 1-6 (MESPAV). A helical transmembrane segment spans residues 7–27 (TFTLAYVVFSVCFVFTPNEFH). Over 28 to 56 (SAGITVQNLLSGWLGSEDVAFVHYHIRRS) the chain is Cytoplasmic. A helical membrane pass occupies residues 57 to 77 (SATLLAHSLLPMGYFIGMCFA). At 78–94 (APEKELYNVHKAADGWK) the chain is on the lumenal side. A helical transmembrane segment spans residues 95-115 (VFVLMAVLLPIATSILAFYWS). Residues 116 to 362 (QKRWSNHPLA…FCIVDVCIVR (247 aa)) lie on the Cytoplasmic side of the membrane. Residues 285 to 350 (CIGCMQTNAN…SSQVPCPTCR (66 aa)) form an RING-type; degenerate zinc finger.

This sequence belongs to the TMEM129 family. As to quaternary structure, integral component of ER-resident dislocation complexes.

It is found in the endoplasmic reticulum membrane. The catalysed reaction is S-ubiquitinyl-[E2 ubiquitin-conjugating enzyme]-L-cysteine + [acceptor protein]-L-lysine = [E2 ubiquitin-conjugating enzyme]-L-cysteine + N(6)-ubiquitinyl-[acceptor protein]-L-lysine.. It participates in protein modification; protein ubiquitination. E3 ubiquitin-protein ligase involved in ER-associated protein degradation, preferentially associates with the E2 enzyme UBE2J2. This is E3 ubiquitin-protein ligase TM129 (tmem129) from Xenopus laevis (African clawed frog).